The following is a 166-amino-acid chain: Ribosome-binding factor A (166 aa).

The disordered stretch occupies residues 122–166; it reads LASTAEHAGDADPYRVDTEDDDDDTDGADAEARSDADVRRGPQSG. Basic and acidic residues predominate over residues 128–138; sequence HAGDADPYRVD. Positions 139–150 are enriched in acidic residues; sequence TEDDDDDTDGAD. A compositionally biased stretch (basic and acidic residues) spans 151-166; it reads AEARSDADVRRGPQSG.

The protein belongs to the RbfA family. Monomer. Binds 30S ribosomal subunits, but not 50S ribosomal subunits or 70S ribosomes.

It is found in the cytoplasm. Functionally, one of several proteins that assist in the late maturation steps of the functional core of the 30S ribosomal subunit. Associates with free 30S ribosomal subunits (but not with 30S subunits that are part of 70S ribosomes or polysomes). Required for efficient processing of 16S rRNA. May interact with the 5'-terminal helix region of 16S rRNA. The protein is Ribosome-binding factor A of Saccharopolyspora erythraea (strain ATCC 11635 / DSM 40517 / JCM 4748 / NBRC 13426 / NCIMB 8594 / NRRL 2338).